The sequence spans 89 residues: Small ribosomal subunit protein uS15 (89 aa).

The protein belongs to the universal ribosomal protein uS15 family. As to quaternary structure, part of the 30S ribosomal subunit. Forms a bridge to the 50S subunit in the 70S ribosome, contacting the 23S rRNA.

Functionally, one of the primary rRNA binding proteins, it binds directly to 16S rRNA where it helps nucleate assembly of the platform of the 30S subunit by binding and bridging several RNA helices of the 16S rRNA. Forms an intersubunit bridge (bridge B4) with the 23S rRNA of the 50S subunit in the ribosome. The polypeptide is Small ribosomal subunit protein uS15 (Anaeromyxobacter sp. (strain Fw109-5)).